We begin with the raw amino-acid sequence, 196 residues long: MSQTELIKKLREATGAGMMDVKRALEDAGWDEEKAVQLLRERGAMKAAKKADREAREGIIGHYIHHNQRVGVLVELNCETDFVARNELFQNLAKDLAMHIAMMNPRYVSAEEIPAEELEKERQIYIQAALNEGKPQQIAEKIAEGRLKKYLEEVVLLEQPFVKDDKVKVKELIQQAIAKIGENIVVRRFCRFELGA.

The interval 80–83 (TDFV) is involved in Mg(2+) ion dislocation from EF-Tu.

This sequence belongs to the EF-Ts family.

The protein localises to the cytoplasm. In terms of biological role, associates with the EF-Tu.GDP complex and induces the exchange of GDP to GTP. It remains bound to the aminoacyl-tRNA.EF-Tu.GTP complex up to the GTP hydrolysis stage on the ribosome. In Thermus thermophilus (strain ATCC BAA-163 / DSM 7039 / HB27), this protein is Elongation factor Ts.